A 328-amino-acid polypeptide reads, in one-letter code: dITP/XTP pyrophosphatase (328 aa).

The unknown stretch occupies residues 1–129 (MSEKIYEYKD…ATSEQGFGDI (129 aa)). The NTP pyrophosphatase stretch occupies residues 130–324 (ILIATRNEGK…KLMEVFPAWQ (195 aa)). 134–139 (TRNEGK) is a binding site for substrate. D196 acts as the Proton acceptor in catalysis. D196 provides a ligand contact to Mg(2+). Residues S197, 280–283 (FGYD), K303, and 308–309 (HR) each bind substrate.

The protein belongs to the HAM1 NTPase family. Homodimer. Mg(2+) serves as cofactor.

The catalysed reaction is XTP + H2O = XMP + diphosphate + H(+). The enzyme catalyses dITP + H2O = dIMP + diphosphate + H(+). It catalyses the reaction ITP + H2O = IMP + diphosphate + H(+). Its function is as follows. Pyrophosphatase that catalyzes the hydrolysis of nucleoside triphosphates to their monophosphate derivatives, with a high preference for the non-canonical purine nucleotides XTP (xanthosine triphosphate), dITP (deoxyinosine triphosphate) and ITP. Seems to function as a house-cleaning enzyme that removes non-canonical purine nucleotides from the nucleotide pool, thus preventing their incorporation into DNA/RNA and avoiding chromosomal lesions. The chain is dITP/XTP pyrophosphatase from Streptococcus pyogenes serotype M3 (strain ATCC BAA-595 / MGAS315).